We begin with the raw amino-acid sequence, 120 residues long: Spermidine export protein MdtJ (120 aa).

4 helical membrane-spanning segments follow: residues 1–21, 31–51, 54–74, and 81–101; these read MFYW…TLSM, AGYI…SFAV, IALG…ITVF, and EVLS…IVLI.

It belongs to the drug/metabolite transporter (DMT) superfamily. Small multidrug resistance (SMR) (TC 2.A.7.1) family. MdtJ subfamily. Forms a complex with MdtI.

The protein localises to the cell inner membrane. Catalyzes the excretion of spermidine. This is Spermidine export protein MdtJ from Salmonella arizonae (strain ATCC BAA-731 / CDC346-86 / RSK2980).